The primary structure comprises 199 residues: Probable thymidylate kinase (199 aa).

13–20 (GIDGAGKT) lines the ATP pocket.

Belongs to the thymidylate kinase family.

It carries out the reaction dTMP + ATP = dTDP + ADP. In Staphylothermus marinus (strain ATCC 43588 / DSM 3639 / JCM 9404 / F1), this protein is Probable thymidylate kinase.